Here is a 317-residue protein sequence, read N- to C-terminus: DNA-directed RNA polymerase subunit alpha (317 aa).

Positions 1 to 230 (MIEIEMEKPK…EHLNLFITLT (230 aa)) are alpha N-terminal domain (alpha-NTD). Positions 247 to 317 (KEKVLEMTIE…LGLGLRPSDE (71 aa)) are alpha C-terminal domain (alpha-CTD).

It belongs to the RNA polymerase alpha chain family. Homodimer. The RNAP catalytic core consists of 2 alpha, 1 beta, 1 beta' and 1 omega subunit. When a sigma factor is associated with the core the holoenzyme is formed, which can initiate transcription.

It carries out the reaction RNA(n) + a ribonucleoside 5'-triphosphate = RNA(n+1) + diphosphate. Its function is as follows. DNA-dependent RNA polymerase catalyzes the transcription of DNA into RNA using the four ribonucleoside triphosphates as substrates. This chain is DNA-directed RNA polymerase subunit alpha, found in Alkaliphilus oremlandii (strain OhILAs) (Clostridium oremlandii (strain OhILAs)).